Here is a 432-residue protein sequence, read N- to C-terminus: Adenylosuccinate synthetase (432 aa).

GTP-binding positions include 12–18 and 40–42; these read GDEGKGK and GHT. The Proton acceptor role is filled by Asp13. Residues Asp13 and Gly40 each coordinate Mg(2+). Residues 13–16, 38–41, Thr133, Arg147, Gln228, Thr243, and Arg307 contribute to the IMP site; these read DEGK and NAGH. His41 serves as the catalytic Proton donor. 303 to 309 is a substrate binding site; the sequence is TTTGRPR. GTP contacts are provided by residues Arg309, 335 to 337, and 417 to 419; these read KLD and GVG.

Belongs to the adenylosuccinate synthetase family. As to quaternary structure, homodimer. It depends on Mg(2+) as a cofactor.

It localises to the cytoplasm. The catalysed reaction is IMP + L-aspartate + GTP = N(6)-(1,2-dicarboxyethyl)-AMP + GDP + phosphate + 2 H(+). It participates in purine metabolism; AMP biosynthesis via de novo pathway; AMP from IMP: step 1/2. In terms of biological role, plays an important role in the de novo pathway of purine nucleotide biosynthesis. Catalyzes the first committed step in the biosynthesis of AMP from IMP. This Nocardioides sp. (strain ATCC BAA-499 / JS614) protein is Adenylosuccinate synthetase.